Consider the following 399-residue polypeptide: Digeranylgeranylglycerophospholipid reductase (399 aa).

FAD-binding residues include Gly15, Glu34, Cys45, Ala46, Gly48, Arg99, Ala123, Asp280, Gly292, and Ile293.

This sequence belongs to the geranylgeranyl reductase family. DGGGPL reductase subfamily. The cofactor is FAD.

It carries out the reaction a 2,3-bis-O-phytanyl-sn-glycerol 1-phospholipid + 8 oxidized 2[4Fe-4S]-[ferredoxin] = a 2,3-bis-O-(geranylgeranyl)-sn-glycerol 1-phospholipid + 8 reduced 2[4Fe-4S]-[ferredoxin] + 16 H(+). The catalysed reaction is 2,3-bis-O-(phytanyl)-sn-glycerol 1-phosphate + 8 oxidized 2[4Fe-4S]-[ferredoxin] = 2,3-bis-O-(geranylgeranyl)-sn-glycerol 1-phosphate + 8 reduced 2[4Fe-4S]-[ferredoxin] + 16 H(+). It catalyses the reaction a 2,3-bis-O-phytanyl-sn-glycerol 1-phospholipid + 8 A = a 2,3-bis-O-(geranylgeranyl)-sn-glycerol 1-phospholipid + 8 AH2. The enzyme catalyses CDP-2,3-bis-O-(geranylgeranyl)-sn-glycerol + 8 AH2 = CDP-2,3-bis-O-(phytanyl)-sn-glycerol + 8 A. It carries out the reaction archaetidylserine + 8 AH2 = 2,3-bis-O-phytanyl-sn-glycero-3-phospho-L-serine + 8 A. The protein operates within membrane lipid metabolism; glycerophospholipid metabolism. Is involved in the reduction of 2,3-digeranylgeranylglycerophospholipids (unsaturated archaeols) into 2,3-diphytanylglycerophospholipids (saturated archaeols) in the biosynthesis of archaeal membrane lipids. Catalyzes the formation of archaetidic acid (2,3-di-O-phytanyl-sn-glyceryl phosphate) from 2,3-di-O-geranylgeranylglyceryl phosphate (DGGGP) via the hydrogenation of each double bond of the isoprenoid chains. Is also probably able to reduce double bonds of geranyl groups in CDP-2,3-bis-O-(geranylgeranyl)-sn-glycerol and archaetidylserine, thus acting at various stages in the biosynthesis of archaeal membrane lipids. The protein is Digeranylgeranylglycerophospholipid reductase of Methanosphaerula palustris (strain ATCC BAA-1556 / DSM 19958 / E1-9c).